Reading from the N-terminus, the 213-residue chain is Superoxide dismutase [Mn] (213 aa).

Residues H27, H82, D168, and H172 each coordinate Mn(2+).

This sequence belongs to the iron/manganese superoxide dismutase family. As to quaternary structure, homodimer.

It carries out the reaction 2 superoxide + 2 H(+) = H2O2 + O2. With respect to regulation, inhibited by hydrogen peroxide. Its function is as follows. Destroys superoxide anion radicals which are normally produced within the cells and which are toxic to biological systems. This chain is Superoxide dismutase [Mn] (sodA), found in Haemophilus ducreyi (strain 35000HP / ATCC 700724).